Here is a 471-residue protein sequence, read N- to C-terminus: Tetratricopeptide repeat protein 29 (471 aa).

TPR repeat units lie at residues Asp-92 to Glu-131, Tyr-136 to Ile-173, Ala-182 to Arg-215, Val-234 to Gly-267, Gly-274 to Leu-307, Gly-314 to Asn-347, and Ile-354 to Val-387.

The protein localises to the cytoplasm. The protein resides in the cytoskeleton. It localises to the flagellum axoneme. Functionally, axonemal protein which is implicated in axonemal and/or peri-axonemal structure assembly and regulates flagellum assembly and beating and therefore sperm motility. The chain is Tetratricopeptide repeat protein 29 (Ttc29) from Rattus norvegicus (Rat).